The sequence spans 740 residues: Catalase-peroxidase (740 aa).

Positions 107–229 (WHAAGTYRIH…LAAVQMGLIY (123 aa)) form a cross-link, tryptophyl-tyrosyl-methioninium (Trp-Tyr) (with M-255). The active-site Proton acceptor is His108. Positions 229 to 255 (YVNPEGPNGNPDPMAAAVDIRETFRRM) form a cross-link, tryptophyl-tyrosyl-methioninium (Tyr-Met) (with W-107). His270 lines the heme b pocket.

Belongs to the peroxidase family. Peroxidase/catalase subfamily. In terms of assembly, homodimer. Heme b serves as cofactor. Post-translationally, formation of the three residue Trp-Tyr-Met cross-link is important for the catalase, but not the peroxidase activity of the enzyme.

It carries out the reaction H2O2 + AH2 = A + 2 H2O. The enzyme catalyses 2 H2O2 = O2 + 2 H2O. Bifunctional enzyme with both catalase and broad-spectrum peroxidase activity. May play a role in the intracellular survival of mycobacteria. This Mycobacterium bovis (strain ATCC BAA-935 / AF2122/97) protein is Catalase-peroxidase.